A 509-amino-acid chain; its full sequence is FAD-linked oxidoreductase dpmaF (509 aa).

Positions 1 to 21 (MTRLSLQLIAGLAGQAWLVNS) are cleaved as a signal peptide. The FAD-binding PCMH-type domain occupies 59–231 (LQYEPIAVAV…AEYGFETFPA (173 aa)). 3 N-linked (GlcNAc...) asparagine glycosylation sites follow: Asn-125, Asn-193, and Asn-281.

This sequence belongs to the oxygen-dependent FAD-linked oxidoreductase family. FAD serves as cofactor.

It participates in secondary metabolite biosynthesis; terpenoid biosynthesis. Functionally, FAD-linked oxidoreductase; part of the gene cluster that mediates the biosynthesis of the diterpenoid pyrones subglutinols A and B. The first step of the pathway is the synthesis of the alpha-pyrone moiety by the polyketide synthase dpmaA via condensation of one acetyl-CoA starter unit with 3 malonyl-CoA units and 2 methylations. The alpha-pyrone is then combined with geranylgeranyl pyrophosphate (GGPP) formed by the GGPP synthase dpmaD through the action of the prenyltransferase dpmaC to yield a linear alpha-pyrone diterpenoid. Subsequent steps in the diterpenoid pyrone biosynthetic pathway involve the decalin core formation, which is initiated by the epoxidation of the C10-C11 olefin by the FAD-dependent oxidoreductase dpmaE, and is followed by a cyclization cascade catalyzed by the terpene cyclase dpmaB. The dehydrogenase dpmaF is then involved in tetrahydrofuran (THF) ring formation at the C5 unit to complete the formation of subglutinols A and B. This is FAD-linked oxidoreductase dpmaF from Metarhizium anisopliae (Entomophthora anisopliae).